The chain runs to 156 residues: ATP synthase subunit b (156 aa).

The chain crosses the membrane as a helical span at residues 13–33 (AFIIFVWFCMKFVWPPLMNAI).

This sequence belongs to the ATPase B chain family. In terms of assembly, F-type ATPases have 2 components, F(1) - the catalytic core - and F(0) - the membrane proton channel. F(1) has five subunits: alpha(3), beta(3), gamma(1), delta(1), epsilon(1). F(0) has three main subunits: a(1), b(2) and c(10-14). The alpha and beta chains form an alternating ring which encloses part of the gamma chain. F(1) is attached to F(0) by a central stalk formed by the gamma and epsilon chains, while a peripheral stalk is formed by the delta and b chains.

It is found in the cell inner membrane. Its function is as follows. F(1)F(0) ATP synthase produces ATP from ADP in the presence of a proton or sodium gradient. F-type ATPases consist of two structural domains, F(1) containing the extramembraneous catalytic core and F(0) containing the membrane proton channel, linked together by a central stalk and a peripheral stalk. During catalysis, ATP synthesis in the catalytic domain of F(1) is coupled via a rotary mechanism of the central stalk subunits to proton translocation. In terms of biological role, component of the F(0) channel, it forms part of the peripheral stalk, linking F(1) to F(0). The polypeptide is ATP synthase subunit b (Shewanella woodyi (strain ATCC 51908 / MS32)).